Consider the following 122-residue polypeptide: Large ribosomal subunit protein uL14 (122 aa).

Belongs to the universal ribosomal protein uL14 family. Part of the 50S ribosomal subunit. Forms a cluster with proteins L3 and L19. In the 70S ribosome, L14 and L19 interact and together make contacts with the 16S rRNA in bridges B5 and B8.

Its function is as follows. Binds to 23S rRNA. Forms part of two intersubunit bridges in the 70S ribosome. This Alteromonas mediterranea (strain DSM 17117 / CIP 110805 / LMG 28347 / Deep ecotype) protein is Large ribosomal subunit protein uL14.